We begin with the raw amino-acid sequence, 534 residues long: Coiled-coil domain-containing protein 183 (534 aa).

Coiled-coil stretches lie at residues 10-54 (EAQI…NLRR), 136-209 (DATK…DMTV), and 321-406 (RFLA…LLVI).

The protein is Coiled-coil domain-containing protein 183 (Ccdc183) of Mus musculus (Mouse).